Consider the following 476-residue polypeptide: Aspartyl/glutamyl-tRNA(Asn/Gln) amidotransferase subunit B (476 aa).

Belongs to the GatB/GatE family. GatB subfamily. Heterotrimer of A, B and C subunits.

The enzyme catalyses L-glutamyl-tRNA(Gln) + L-glutamine + ATP + H2O = L-glutaminyl-tRNA(Gln) + L-glutamate + ADP + phosphate + H(+). The catalysed reaction is L-aspartyl-tRNA(Asn) + L-glutamine + ATP + H2O = L-asparaginyl-tRNA(Asn) + L-glutamate + ADP + phosphate + 2 H(+). Allows the formation of correctly charged Asn-tRNA(Asn) or Gln-tRNA(Gln) through the transamidation of misacylated Asp-tRNA(Asn) or Glu-tRNA(Gln) in organisms which lack either or both of asparaginyl-tRNA or glutaminyl-tRNA synthetases. The reaction takes place in the presence of glutamine and ATP through an activated phospho-Asp-tRNA(Asn) or phospho-Glu-tRNA(Gln). The chain is Aspartyl/glutamyl-tRNA(Asn/Gln) amidotransferase subunit B from Bacillus cytotoxicus (strain DSM 22905 / CIP 110041 / 391-98 / NVH 391-98).